We begin with the raw amino-acid sequence, 255 residues long: Phosphoribosylaminoimidazole-succinocarboxamide synthase A (255 aa).

This sequence belongs to the SAICAR synthetase family.

The enzyme catalyses 5-amino-1-(5-phospho-D-ribosyl)imidazole-4-carboxylate + L-aspartate + ATP = (2S)-2-[5-amino-1-(5-phospho-beta-D-ribosyl)imidazole-4-carboxamido]succinate + ADP + phosphate + 2 H(+). Its pathway is purine metabolism; IMP biosynthesis via de novo pathway; 5-amino-1-(5-phospho-D-ribosyl)imidazole-4-carboxamide from 5-amino-1-(5-phospho-D-ribosyl)imidazole-4-carboxylate: step 1/2. In Bradyrhizobium diazoefficiens (strain JCM 10833 / BCRC 13528 / IAM 13628 / NBRC 14792 / USDA 110), this protein is Phosphoribosylaminoimidazole-succinocarboxamide synthase A (purC1).